The primary structure comprises 307 residues: Small ribosomal subunit biogenesis GTPase RsgA (307 aa).

The tract at residues 1–20 (MPSEHPFSDGISTPNPKETM) is disordered. A compositionally biased stretch (polar residues) spans 10-20 (GISTPNPKETM). Residues 85 to 242 (RQDAWKTKLI…LIDSPGLQEF (158 aa)) form the CP-type G domain. GTP-binding positions include 135 to 138 (NKAD) and 184 to 192 (GQSGMGKST). 4 residues coordinate Zn(2+): Cys-266, Cys-271, His-273, and Cys-279.

Belongs to the TRAFAC class YlqF/YawG GTPase family. RsgA subfamily. In terms of assembly, monomer. Associates with 30S ribosomal subunit, binds 16S rRNA. Zn(2+) serves as cofactor.

It localises to the cytoplasm. In terms of biological role, one of several proteins that assist in the late maturation steps of the functional core of the 30S ribosomal subunit. Helps release RbfA from mature subunits. May play a role in the assembly of ribosomal proteins into the subunit. Circularly permuted GTPase that catalyzes slow GTP hydrolysis, GTPase activity is stimulated by the 30S ribosomal subunit. The sequence is that of Small ribosomal subunit biogenesis GTPase RsgA from Neisseria meningitidis serogroup A / serotype 4A (strain DSM 15465 / Z2491).